Here is a 36-residue protein sequence, read N- to C-terminus: Potassium channel toxin alpha-KTx 23.1 (36 aa).

4 disulfides stabilise this stretch: Cys6/Cys26, Cys12/Cys31, Cys16/Cys33, and Cys21/Cys36. Cys36 is modified (cysteine amide).

It belongs to the short scorpion toxin superfamily. Potassium channel inhibitor family. Alpha-KTx 23 subfamily. As to expression, expressed by the venom gland.

Its subcellular location is the secreted. Voltage-gated potassium channel inhibitor. Selectively and irreversibly binds (K(d)=2.9 pM) and blocks hKv1.3/KCNA3 potassium channels of human T-lymphocytes. Weakly blocks hKCa3.1/KCNN4, mKv1.1/KCNA1, and hKv1.2/KCNA2 channels. In vivo, high doses (200 ug) produce no symptoms of intoxication when injected into mice. This chain is Potassium channel toxin alpha-KTx 23.1, found in Vaejovis mexicanus smithi (Mexican scorpion).